The primary structure comprises 189 residues: UPF0301 protein HRM2_24640 (189 aa).

Belongs to the UPF0301 (AlgH) family.

The protein is UPF0301 protein HRM2_24640 of Desulforapulum autotrophicum (strain ATCC 43914 / DSM 3382 / VKM B-1955 / HRM2) (Desulfobacterium autotrophicum).